We begin with the raw amino-acid sequence, 211 residues long: Small ribosomal subunit protein uS3 (211 aa).

Positions 16–85 (IDEYFKTKLV…NPQIEVKQVE (70 aa)) constitute a KH type-2 domain.

Belongs to the universal ribosomal protein uS3 family. As to quaternary structure, part of the 30S ribosomal subunit.

In terms of biological role, binds the lower part of the 30S subunit head. In Methanococcus maripaludis (strain C5 / ATCC BAA-1333), this protein is Small ribosomal subunit protein uS3.